Consider the following 938-residue polypeptide: Isoleucine--tRNA ligase (938 aa).

Residues 58 to 68 (PYANGSIHIGH) carry the 'HIGH' region motif. Glu-561 provides a ligand contact to L-isoleucyl-5'-AMP. A 'KMSKS' region motif is present at residues 602–606 (KMSKS). Lys-605 provides a ligand contact to ATP. 4 residues coordinate Zn(2+): Cys-901, Cys-904, Cys-921, and Cys-924.

The protein belongs to the class-I aminoacyl-tRNA synthetase family. IleS type 1 subfamily. In terms of assembly, monomer. It depends on Zn(2+) as a cofactor.

The protein localises to the cytoplasm. It carries out the reaction tRNA(Ile) + L-isoleucine + ATP = L-isoleucyl-tRNA(Ile) + AMP + diphosphate. Its function is as follows. Catalyzes the attachment of isoleucine to tRNA(Ile). As IleRS can inadvertently accommodate and process structurally similar amino acids such as valine, to avoid such errors it has two additional distinct tRNA(Ile)-dependent editing activities. One activity is designated as 'pretransfer' editing and involves the hydrolysis of activated Val-AMP. The other activity is designated 'posttransfer' editing and involves deacylation of mischarged Val-tRNA(Ile). This chain is Isoleucine--tRNA ligase, found in Baumannia cicadellinicola subsp. Homalodisca coagulata.